A 628-amino-acid chain; its full sequence is tRNA (carboxymethyluridine(34)-5-O)-methyltransferase alkbh8 (628 aa).

The RRM domain maps to 43-123 (QSLVVANGGL…ITLYLSFVEK (81 aa)). A Fe2OG dioxygenase domain is found at 218 to 335 (DPDQLTINQY…RTSFTFRKVR (118 aa)). 225–227 (NQY) serves as a coordination point for 2-oxoglutarate. Residues His-236 and Asp-238 each coordinate Fe cation. His-240 is a binding site for Zn(2+). His-290 is a binding site for Fe cation. Positions 326 and 332 each coordinate 2-oxoglutarate. Zn(2+)-binding residues include Cys-339, Cys-341, and Cys-347. A methyltransferase domain region spans residues 410–628 (ADVGCGNGKY…GNWCVILEKL (219 aa)). The segment at 563–582 (PTNKSKVTPENKEQNEKEHG) is disordered. Residues 569–582 (VTPENKEQNEKEHG) are compositionally biased toward basic and acidic residues.

This sequence belongs to the alkB family. The cofactor is Fe(2+).

It localises to the cytoplasm. Its subcellular location is the nucleus. It catalyses the reaction 5-(carboxymethyl)uridine(34) in tRNA + S-adenosyl-L-methionine = 5-(2-methoxy-2-oxoethyl)uridine(34) in tRNA + S-adenosyl-L-homocysteine. In terms of biological role, catalyzes the methylation of 5-carboxymethyl uridine to 5-methylcarboxymethyl uridine at the wobble position of the anticodon loop in tRNA via its methyltransferase domain. Catalyzes the last step in the formation of 5-methylcarboxymethyl uridine at the wobble position of the anticodon loop in target tRNA. Has a preference for tRNA(Arg) and tRNA(Glu), and does not bind tRNA(Lys). Binds tRNA and catalyzes the iron and alpha-ketoglutarate dependent hydroxylation of 5-methylcarboxymethyl uridine at the wobble position of the anticodon loop in tRNA via its dioxygenase domain, giving rise to 5-(S)-methoxycarbonylhydroxymethyluridine; has a preference for tRNA(Gly). Required for normal survival after DNA damage. May inhibit apoptosis and promote cell survival and angiogenesis. This is tRNA (carboxymethyluridine(34)-5-O)-methyltransferase alkbh8 (alkbh8) from Xenopus tropicalis (Western clawed frog).